The sequence spans 113 residues: Hydrogenase maturation factor HypA (113 aa).

His2 contributes to the Ni(2+) binding site. Positions 73, 76, 89, and 92 each coordinate Zn(2+).

This sequence belongs to the HypA/HybF family.

In terms of biological role, involved in the maturation of [NiFe] hydrogenases. Required for nickel insertion into the metal center of the hydrogenase. The chain is Hydrogenase maturation factor HypA from Legionella pneumophila (strain Paris).